A 198-amino-acid chain; its full sequence is dITP/XTP pyrophosphatase (198 aa).

8 to 13 (TKNKGK) is a binding site for substrate. Aspartate 69 acts as the Proton acceptor in catalysis. Aspartate 69 lines the Mg(2+) pocket. Substrate-binding positions include serine 70, 152-155 (FGYD), lysine 175, and 180-181 (HR).

Belongs to the HAM1 NTPase family. As to quaternary structure, homodimer. The cofactor is Mg(2+).

It carries out the reaction XTP + H2O = XMP + diphosphate + H(+). The enzyme catalyses dITP + H2O = dIMP + diphosphate + H(+). It catalyses the reaction ITP + H2O = IMP + diphosphate + H(+). Functionally, pyrophosphatase that catalyzes the hydrolysis of nucleoside triphosphates to their monophosphate derivatives, with a high preference for the non-canonical purine nucleotides XTP (xanthosine triphosphate), dITP (deoxyinosine triphosphate) and ITP. Seems to function as a house-cleaning enzyme that removes non-canonical purine nucleotides from the nucleotide pool, thus preventing their incorporation into DNA/RNA and avoiding chromosomal lesions. The sequence is that of dITP/XTP pyrophosphatase from Shouchella clausii (strain KSM-K16) (Alkalihalobacillus clausii).